Reading from the N-terminus, the 585-residue chain is Pyruvate kinase (585 aa).

Arg-32 contacts substrate. K(+)-binding residues include Asn-34, Ser-36, Asp-66, and Thr-67. 34–37 provides a ligand contact to ATP; sequence NFSH. Residues Arg-73 and Lys-156 each coordinate ATP. Residue Glu-221 coordinates Mg(2+). Gly-244, Asp-245, and Thr-277 together coordinate substrate. Asp-245 is a binding site for Mg(2+).

This sequence belongs to the pyruvate kinase family. In the C-terminal section; belongs to the PEP-utilizing enzyme family. It depends on Mg(2+) as a cofactor. K(+) serves as cofactor.

It carries out the reaction pyruvate + ATP = phosphoenolpyruvate + ADP + H(+). Its pathway is carbohydrate degradation; glycolysis; pyruvate from D-glyceraldehyde 3-phosphate: step 5/5. This Staphylococcus aureus (strain MRSA252) protein is Pyruvate kinase (pyk).